Here is a 217-residue protein sequence, read N- to C-terminus: Small ribosomal subunit protein uS3 (217 aa).

Residues 38 to 106 enclose the KH type-2 domain; the sequence is IRKFIDNELK…KVHINVIEIK (69 aa).

This sequence belongs to the universal ribosomal protein uS3 family. As to quaternary structure, part of the 30S ribosomal subunit. Forms a tight complex with proteins S10 and S14.

Binds the lower part of the 30S subunit head. Binds mRNA in the 70S ribosome, positioning it for translation. In Staphylococcus aureus (strain COL), this protein is Small ribosomal subunit protein uS3 (rpsC).